The chain runs to 331 residues: Biotin synthase (331 aa).

The Radical SAM core domain occupies 52-277; it reads PEVEVEGIVS…RTILRYAGGR (226 aa). [4Fe-4S] cluster is bound by residues cysteine 67, cysteine 71, and cysteine 74. [2Fe-2S] cluster is bound by residues cysteine 110, cysteine 202, and arginine 272.

This sequence belongs to the radical SAM superfamily. Biotin synthase family. In terms of assembly, homodimer. The cofactor is [4Fe-4S] cluster. [2Fe-2S] cluster serves as cofactor.

It carries out the reaction (4R,5S)-dethiobiotin + (sulfur carrier)-SH + 2 reduced [2Fe-2S]-[ferredoxin] + 2 S-adenosyl-L-methionine = (sulfur carrier)-H + biotin + 2 5'-deoxyadenosine + 2 L-methionine + 2 oxidized [2Fe-2S]-[ferredoxin]. It functions in the pathway cofactor biosynthesis; biotin biosynthesis; biotin from 7,8-diaminononanoate: step 2/2. In terms of biological role, catalyzes the conversion of dethiobiotin (DTB) to biotin by the insertion of a sulfur atom into dethiobiotin via a radical-based mechanism. This is Biotin synthase from Salinispora tropica (strain ATCC BAA-916 / DSM 44818 / JCM 13857 / NBRC 105044 / CNB-440).